We begin with the raw amino-acid sequence, 97 residues long: Peptide YY (97 aa).

The first 28 residues, 1–28, serve as a signal peptide directing secretion; it reads MVFVRRPWPALTTVLLALLVCLGALVDA. Phosphoserine is present on Ser-41. Position 64 is a tyrosine amide (Tyr-64). Residues 65 to 97 form a disordered region; the sequence is GKRDGPDTLLSKTFFPDGEDRPVRSRSEGPDLW. A propeptide spanning residues 68–97 is cleaved from the precursor; that stretch reads DGPDTLLSKTFFPDGEDRPVRSRSEGPDLW. The span at 82 to 97 shows a compositional bias: basic and acidic residues; sequence GEDRPVRSRSEGPDLW.

This sequence belongs to the NPY family. Post-translationally, the peptide YY form is cleaved at Pro-30 by the prolyl endopeptidase FAP (seprase) activity (in vitro) to generate peptide YY(3-36).

The protein resides in the secreted. Functionally, this gut peptide inhibits exocrine pancreatic secretion, has a vasoconstrictory action and inhibitis jejunal and colonic mobility. This chain is Peptide YY (PYY), found in Homo sapiens (Human).